A 632-amino-acid polypeptide reads, in one-letter code: 1-deoxy-D-xylulose-5-phosphate synthase (632 aa).

Thiamine diphosphate contacts are provided by residues H77 and 118-120 (GHS). Residue D149 coordinates Mg(2+). Thiamine diphosphate is bound by residues 150–151 (GA), N178, Y289, and E372. Position 178 (N178) interacts with Mg(2+).

Belongs to the transketolase family. DXPS subfamily. Homodimer. The cofactor is Mg(2+). It depends on thiamine diphosphate as a cofactor.

It carries out the reaction D-glyceraldehyde 3-phosphate + pyruvate + H(+) = 1-deoxy-D-xylulose 5-phosphate + CO2. It participates in metabolic intermediate biosynthesis; 1-deoxy-D-xylulose 5-phosphate biosynthesis; 1-deoxy-D-xylulose 5-phosphate from D-glyceraldehyde 3-phosphate and pyruvate: step 1/1. Its function is as follows. Catalyzes the acyloin condensation reaction between C atoms 2 and 3 of pyruvate and glyceraldehyde 3-phosphate to yield 1-deoxy-D-xylulose-5-phosphate (DXP). This is 1-deoxy-D-xylulose-5-phosphate synthase from Listeria innocua serovar 6a (strain ATCC BAA-680 / CLIP 11262).